Here is a 331-residue protein sequence, read N- to C-terminus: Fructose-1,6-bisphosphatase class 1 2 (331 aa).

Residues Glu80, Asp98, Leu100, and Asp101 each coordinate Mg(2+). Residues 101-104 (DGSS) and Asn189 each bind substrate. Glu261 serves as a coordination point for Mg(2+).

The protein belongs to the FBPase class 1 family. In terms of assembly, homotetramer. Requires Mg(2+) as cofactor.

Its subcellular location is the cytoplasm. It carries out the reaction beta-D-fructose 1,6-bisphosphate + H2O = beta-D-fructose 6-phosphate + phosphate. It functions in the pathway carbohydrate biosynthesis; Calvin cycle. This Cereibacter sphaeroides (strain ATCC 17029 / ATH 2.4.9) (Rhodobacter sphaeroides) protein is Fructose-1,6-bisphosphatase class 1 2.